The following is a 420-amino-acid chain: Putative transporter AmpG 3 (420 aa).

A run of 12 helical transmembrane segments spans residues Tyr6 to Phe26, Ile41 to Phe61, Gly79 to Ser99, Leu104 to Val124, Ile141 to Ala161, Ile166 to Ile186, Leu230 to Met250, Leu274 to Phe294, Val297 to Ile317, Phe324 to Ile344, Tyr359 to Ala381, and Trp386 to Ile406.

This sequence belongs to the major facilitator superfamily.

It is found in the cell inner membrane. This Rickettsia typhi (strain ATCC VR-144 / Wilmington) protein is Putative transporter AmpG 3 (ampG3).